Reading from the N-terminus, the 180-residue chain is WPP domain-containing protein 2 (180 aa).

Residues 1–26 are compositionally biased toward low complexity; it reads MAETAETINTTISSPPPESESSTTIS. Disordered regions lie at residues 1 to 61 and 140 to 180; these read MAET…LRIW and SVKA…KSEA. The segment covering 27–36 has biased composition (polar residues); the sequence is AMTDPTSQEA. The segment covering 37–53 has biased composition (basic and acidic residues); it reads ASKDTDLTKEAESEKKP. The segment at 44–147 is WPP; it reads TKEAESEKKP…LESVKARSNA (104 aa). At Ser-173 the chain carries Phosphoserine.

In terms of assembly, binds to FPP proteins. Interacts with WAP, WIP1, WIP2 and WIP3 through its WPP domain. Interacts with WIT1 and HSP70-1. Expressed in roots, stems, leaves and flowers.

The protein localises to the nucleus envelope. Its subcellular location is the cytoplasm. The protein resides in the nucleus. It localises to the golgi apparatus. In terms of biological role, regulates the mitotic activity in roots. Plays a role with HSP70-1 in facilitating WIT1 nuclear envelope targeting. This chain is WPP domain-containing protein 2 (WPP2), found in Arabidopsis thaliana (Mouse-ear cress).